The following is a 124-amino-acid chain: Translation initiation factor 5A (124 aa).

Lys36 bears the Hypusine mark.

It belongs to the eIF-5A family.

The protein resides in the cytoplasm. Functions by promoting the formation of the first peptide bond. The sequence is that of Translation initiation factor 5A from Haloquadratum walsbyi (strain DSM 16790 / HBSQ001).